Consider the following 207-residue polypeptide: Adenylyl-sulfate kinase (207 aa).

39–46 (GLSGAGKS) is an ATP binding site. Ser113 serves as the catalytic Phosphoserine intermediate.

Belongs to the APS kinase family.

It carries out the reaction adenosine 5'-phosphosulfate + ATP = 3'-phosphoadenylyl sulfate + ADP + H(+). The protein operates within sulfur metabolism; hydrogen sulfide biosynthesis; sulfite from sulfate: step 2/3. In terms of biological role, catalyzes the synthesis of activated sulfate. The sequence is that of Adenylyl-sulfate kinase from Vibrio vulnificus (strain CMCP6).